The chain runs to 432 residues: MRVVILGSGVVGVTSAWYLSQAGHDVTVIDRESGPAQETSAANAGQISPGYAAPWAAPGVPLKAIKWMFQRHAPLAVRLDGTPFQLKWMWQMLRNCDTRHYMENKGRMVRLAEYSRDCLKTLRAATGIEYEGRQGGTLQLFRTAQQYENATRDIAVLEDAGVPYQLLEASRLAEVEPALAEVAHKLTGGLRLPNDETGDCQLFTQRLARMAEQAGVTFRFNTPVEKLLYENDQIYGVKCADEIIKADAYVMAFGSYSTAMLKGIVDIPVYPLKGYSLTIPIVEPDGAPVSTILDETYKIAITRFDKRIRVGGMAEIVGFNTDLLQPHRETLEMVVRDLFPRGGHIEQATFWTGLRPMTPDGTPVVGRTRYKNLWLNTGHGTLGWTMACGSGQLLSDILSGRTPAIPYDDLSVARYRSDFTPTRPQRLHSAHN.

Residue 3 to 17 (VVILGSGVVGVTSAW) participates in FAD binding.

Belongs to the DadA oxidoreductase family. FAD serves as cofactor.

The catalysed reaction is a D-alpha-amino acid + A + H2O = a 2-oxocarboxylate + AH2 + NH4(+). It functions in the pathway amino-acid degradation; D-alanine degradation; NH(3) and pyruvate from D-alanine: step 1/1. Oxidative deamination of D-amino acids. The polypeptide is D-amino acid dehydrogenase (Salmonella paratyphi C (strain RKS4594)).